Here is a 275-residue protein sequence, read N- to C-terminus: Probable histone chaperone asf-1 (275 aa).

Acidic residues-rich tracts occupy residues Glu157 to Asp166, Asp183 to Leu207, and Lys230 to Pro247. The disordered stretch occupies residues Glu157–Gln275. The segment covering Leu265 to Gln275 has biased composition (basic and acidic residues).

The protein belongs to the ASF1 family. In terms of assembly, interacts with histone H3 and histone H4.

Its subcellular location is the nucleus. Histone chaperone that facilitates histone deposition and histone exchange and removal during nucleosome assembly and disassembly. In Caenorhabditis elegans, this protein is Probable histone chaperone asf-1.